Here is a 280-residue protein sequence, read N- to C-terminus: Putative transcription factor kapC (280 aa).

The tract at residues 1 to 102 is disordered; the sequence is MQPALAPHPS…GKRPLSTSKR (102 aa). Positions 39–49 are enriched in pro residues; it reads PQPPAPQPPHM. A compositionally biased stretch (polar residues) spans 79-89; the sequence is TQPDVTGQETP. The 64-residue stretch at 96 to 159 folds into the bZIP domain; that stretch reads PLSTSKRAAQ…EYIINLQSRL (64 aa). Positions 97 to 120 are basic motif; it reads LSTSKRAAQNRAAQRAFRQRKEAH. Residues 124 to 155 are leucine-zipper; sequence LEGKVKAYENMGEAIKALQAENYQLREYIINL. The segment at 169–280 is disordered; sequence LPGNIDLSQP…EQTHGLPLIS (112 aa). Positions 197 to 211 are enriched in pro residues; that stretch reads APPPTAPQQPQPPHA.

This sequence belongs to the bZIP family.

It is found in the nucleus. In terms of biological role, putative transcription factor. This is Putative transcription factor kapC (kapC) from Neosartorya fischeri (strain ATCC 1020 / DSM 3700 / CBS 544.65 / FGSC A1164 / JCM 1740 / NRRL 181 / WB 181) (Aspergillus fischerianus).